The following is a 997-amino-acid chain: Signal peptide, CUB and EGF-like domain-containing protein 2 (997 aa).

The signal sequence occupies residues 1–28; it reads MGVAGCGRPREARALLLLLLLLPPLLAA. Residues 43-83 enclose the EGF-like 1; calcium-binding domain; sequence DVDECAQGLDDCHADALCQNTPTSYKCSCKPGYQGEGRQCE. Intrachain disulfides connect Cys47-Cys60, Cys54-Cys69, Cys71-Cys82, Cys88-Cys100, Cys96-Cys109, Cys111-Cys124, Cys130-Cys141, and Cys137-Cys150. The region spanning 84–125 is the EGF-like 2; calcium-binding domain; that stretch reads DMDECDNTLNGGCVHDCLNIPGNYRCTCFDGFMLAHDGHNCL. One can recognise an EGF-like 3; calcium-binding domain in the interval 126 to 162; it reads DMDECLENNGGCQHICTNVIGSYECRCKEGFFLSDNQ. EGF-like domains lie at 175 to 211, 215 to 250, and 284 to 319; these read CMNK…QKDC, CNHG…GRSC, and CAVN…GKTC. Residues 321-361 enclose the EGF-like 7; calcium-binding domain; sequence DIDECQTRNGGCNHFCKNTVGSFDCSCKKGFKLLTDEKSCQ. Cystine bridges form between Cys325-Cys336, Cys332-Cys345, Cys347-Cys360, Cys366-Cys376, Cys372-Cys385, Cys387-Cys399, Cys405-Cys416, Cys412-Cys425, and Cys427-Cys440. Residues 362 to 400 enclose the EGF-like 8; calcium-binding domain; that stretch reads DVDECSLERTCDHSCINHPGTFICACNPGYTLYSFTHCG. One can recognise an EGF-like 9; calcium-binding domain in the interval 401 to 441; the sequence is DTNECSVNNGGCQQVCINTVGSYECQCHPGFKLHWNKKDCV. Asn657 carries an N-linked (GlcNAc...) asparagine glycan. Cys807 and Cys833 form a disulfide bridge. One can recognise a CUB domain in the interval 807–919; the sequence is CGGELGDFTG…RGFQVPYVTY (113 aa). Positions 845-854 are interaction with the cholesterol-anchor of SHH; it reads ILIVVPEIFL. Cys860 and Cys881 are oxidised to a cystine.

As to quaternary structure, interacts with SHH via the cholesterol anchor of the dually lipid-modified SHH (ShhNp). Interacts with PTCH1. Forms homooligomers and heterooligomers with SCUBE1 and SCUBE3. Interacts with VEGFR2. In terms of processing, N-glycosylated. As to expression, expressed in adult heart, lung and testis.

The protein resides in the secreted. Its subcellular location is the cell surface. Functionally, lipid-binding protein required for SHH long-range signaling by binding to the dually lipid-modified SHH (ShhNp) and by promoting ShhNp mobilization, solubilization and release from the cell membrane. Acts by enhancing the proteolytic processing (shedding) of the lipid-modified N- and C- terminal of ShhNp at the cell surface. Synergizes with DISP1 to cause an increase in SHH secretion. Probable cell surface coreceptor for VEGFR2 involved in VEGFR2-mediated angiogenesis. This chain is Signal peptide, CUB and EGF-like domain-containing protein 2, found in Mus musculus (Mouse).